The chain runs to 288 residues: Ribosomal RNA small subunit methyltransferase A (288 aa).

Residues N28, L30, G55, E77, D103, and N123 each coordinate S-adenosyl-L-methionine.

It belongs to the class I-like SAM-binding methyltransferase superfamily. rRNA adenine N(6)-methyltransferase family. RsmA subfamily.

Its subcellular location is the cytoplasm. It catalyses the reaction adenosine(1518)/adenosine(1519) in 16S rRNA + 4 S-adenosyl-L-methionine = N(6)-dimethyladenosine(1518)/N(6)-dimethyladenosine(1519) in 16S rRNA + 4 S-adenosyl-L-homocysteine + 4 H(+). Functionally, specifically dimethylates two adjacent adenosines (A1518 and A1519) in the loop of a conserved hairpin near the 3'-end of 16S rRNA in the 30S particle. May play a critical role in biogenesis of 30S subunits. The sequence is that of Ribosomal RNA small subunit methyltransferase A from Xanthobacter autotrophicus (strain ATCC BAA-1158 / Py2).